Here is a 138-residue protein sequence, read N- to C-terminus: Small ribosomal subunit protein uS11c (138 aa).

Residues 1–22 form a disordered region; it reads MAKSIPKTGSRKNVRIGSRNQT.

It belongs to the universal ribosomal protein uS11 family. Part of the 30S ribosomal subunit.

The protein resides in the plastid. Its subcellular location is the chloroplast. The polypeptide is Small ribosomal subunit protein uS11c (Phaseolus angularis (Azuki bean)).